Here is a 387-residue protein sequence, read N- to C-terminus: MKKEKADKALEKETDQRKQAIDAALGQIEKQFGKGSIMRLGADTRMSEMNVVSTGSLDLDIALGIGGFPSGRIIEIYGPESSGKTTLTLSAIAETQKKGGIAAFIDAEHALDPSYAKKLGVNVDDLLVAQPDNGEEALEICESLVRSNAIDLIVIDSVAALVPKAEIEGDMGDSHMGLQARLMSQALRKLTGTISKSSTTVIFINQIRMKIGVMFGSPETTTGGNALKFYASIRLDIRRIETLKEKEEPVGNRVRVKVVKNKCAPPFRQAEFDIMYANGINRESSLIDLAVRHDLVAKAGSWYSYNGEKIGQGKEQVRNFFLENPDIAFKIENQVRDLNALPLLDQAKIQTREVKSIERDTKETKETKSKQPVSFSTEADGDIAVGE.

Gly-78–Thr-85 contacts ATP. The span at Lys-355–Ser-369 shows a compositional bias: basic and acidic residues. Residues Lys-355–Glu-387 form a disordered region.

It belongs to the RecA family.

The protein resides in the cytoplasm. Functionally, can catalyze the hydrolysis of ATP in the presence of single-stranded DNA, the ATP-dependent uptake of single-stranded DNA by duplex DNA, and the ATP-dependent hybridization of homologous single-stranded DNAs. It interacts with LexA causing its activation and leading to its autocatalytic cleavage. This is Protein RecA from Leptospira biflexa serovar Patoc (strain Patoc 1 / ATCC 23582 / Paris).